Consider the following 406-residue polypeptide: F-box/WD repeat-containing protein mec-15 (406 aa).

The F-box domain occupies 6-53 (PTELISLPSELLCHLFTYLPQRQLITEIPLVCRRFNTILNDDKFWSRR). 5 WD repeats span residues 101–142 (GHSA…NGED), 156–195 (AHSG…ALQN), 242–279 (LHKR…KPVL), 281–320 (EYSP…VLQT), and 365–406 (SHEL…DQEN).

May interact with the SCF ubiquitin ligase complex component skr-1. Expressed in several neurons in the head, tail and ventral cord, but absent in touch receptor neurons in adults. Expressed in GABAergic and cholinergic motor neurons.

The protein resides in the perikaryon. In terms of biological role, plays a role in mechanosensory transduction (touch sensitivity), touch receptor neuron development and synapse formation. Regulates expression of the protein snb-1 and the distribution of synaptic vesicles at synapses to promote synaptic transmission at the neuromuscular junctions of GABAergic motor neurons. The polypeptide is F-box/WD repeat-containing protein mec-15 (Caenorhabditis elegans).